The primary structure comprises 291 residues: Transmembrane protein 41B (291 aa).

A compositionally biased stretch (basic and acidic residues) spans 1–11 (MAKGRVAERSQ). Positions 1–38 (MAKGRVAERSQTEMLHSTPAGDRAVGTQGSAAPGNKDH) are disordered. Position 18 is a phosphothreonine (Thr18). The next 6 helical transmembrane spans lie at 52 to 72 (TSLLILVSIFSCAAFVMFLVY), 109 to 129 (FYVQVLVAYFATYIFLQTFAI), 147 to 169 (LALFLVCLCSGLGASFCYMLSYL), 197 to 217 (LINYIIFLRITPFLPNWFINI), 225 to 245 (PLKVFFIGTFLGVAPPSFVAI), and 262 to 282 (SWNSVFILMILALLSILPAIF). Positions 140–251 (GFLYPFPLAL…FVAIKAGTTL (112 aa)) are VTT domain; required for its function in autophagy.

Belongs to the TMEM41 family. As to quaternary structure, interacts with VMP1. Interacts with COPA, COPB1, VDAC1 and ERLIN2. Interacts with ATG2A. Interacts with SURF4.

It is found in the endoplasmic reticulum membrane. The protein resides in the endomembrane system. It catalyses the reaction a 1,2-diacyl-sn-glycero-3-phospho-L-serine(in) = a 1,2-diacyl-sn-glycero-3-phospho-L-serine(out). The catalysed reaction is cholesterol(in) = cholesterol(out). It carries out the reaction a 1,2-diacyl-sn-glycero-3-phosphocholine(in) = a 1,2-diacyl-sn-glycero-3-phosphocholine(out). The enzyme catalyses a 1,2-diacyl-sn-glycero-3-phosphoethanolamine(in) = a 1,2-diacyl-sn-glycero-3-phosphoethanolamine(out). Functionally, phospholipid scramblase involved in lipid homeostasis and membrane dynamics processes. Has phospholipid scramblase activity toward cholesterol and phosphatidylserine, as well as phosphatidylethanolamine and phosphatidylcholine. Required for autophagosome formation: participates in early stages of autophagosome biogenesis at the endoplasmic reticulum (ER) membrane by reequilibrating the leaflets of the ER as lipids are extracted by ATG2 (ATG2A or ATG2B) to mediate autophagosome assembly. In addition to autophagy, involved in other processes in which phospholipid scramblase activity is required. Required for normal motor neuron development. In Rattus norvegicus (Rat), this protein is Transmembrane protein 41B.